We begin with the raw amino-acid sequence, 428 residues long: Elongation factor 1-alpha (428 aa).

The 213-residue stretch at 5 to 217 (KPHVNIVFIG…DQIPEPEKPV (213 aa)) folds into the tr-type G domain. Residues 14-21 (GHVDHGKS) form a G1 region. Residue 14-21 (GHVDHGKS) coordinates GTP. Mg(2+) is bound at residue Ser21. Residues 68–72 (GITID) are G2. Positions 89–92 (DAPG) are G3. GTP is bound by residues 89 to 93 (DAPGH) and 144 to 147 (NKMD). The segment at 144–147 (NKMD) is G4. The G5 stretch occupies residues 181 to 183 (SAW).

This sequence belongs to the TRAFAC class translation factor GTPase superfamily. Classic translation factor GTPase family. EF-Tu/EF-1A subfamily.

The protein localises to the cytoplasm. The catalysed reaction is GTP + H2O = GDP + phosphate + H(+). Functionally, GTP hydrolase that promotes the GTP-dependent binding of aminoacyl-tRNA to the A-site of ribosomes during protein biosynthesis. In Pyrococcus abyssi (strain GE5 / Orsay), this protein is Elongation factor 1-alpha.